The primary structure comprises 435 residues: Putative F-box/kelch-repeat protein At1g13200 (435 aa).

A disordered region spans residues 1–29; it reads MKDAEKREVIASSSLQRKRNRGRRLRKRR. The span at 16 to 29 shows a compositional bias: basic residues; the sequence is QRKRNRGRRLRKRR. Positions 37–82 constitute an F-box domain; it reads LMVPSSLPNDVLEEIFLRFPVKALIRLKSLSKQWRSTIESRSFEER. Kelch repeat units lie at residues 164-217, 224-270, 273-317, and 322-368; these read SVYV…DYKL, DKYI…PASA, SVYW…HIDM, and NSLC…EKRD.

In Arabidopsis thaliana (Mouse-ear cress), this protein is Putative F-box/kelch-repeat protein At1g13200.